Consider the following 310-residue polypeptide: MKIIYMGTPEFAVPCLEMLIDSGHEIVGVFTQPDKPSGRGQKMNRTPVKEKALAHNIPVFQPHTLRDTNVMNEIENLKPDLIVVVAYGQILPKAILELPKHGCINVHASLLPKYRGAGPINWVIINGEKKTGITTMYMDVGLDKGDMILKEEVEIGAEETAGELHDRLMHLGAQVLRKTIGLIENNEITAIPQNHSESTYAPILTKDLGKIDWSQSAIEIKNLIRGTIPWPTAFTFYEGQVMKIWKSTVIESELQEVPGKIIDVKKDCILVATGQNILSIEEIQFSGKKRMGVRDYLVGNAIEKGNILGE.

109–112 (SLLP) contacts (6S)-5,6,7,8-tetrahydrofolate.

This sequence belongs to the Fmt family.

The enzyme catalyses L-methionyl-tRNA(fMet) + (6R)-10-formyltetrahydrofolate = N-formyl-L-methionyl-tRNA(fMet) + (6S)-5,6,7,8-tetrahydrofolate + H(+). Its function is as follows. Attaches a formyl group to the free amino group of methionyl-tRNA(fMet). The formyl group appears to play a dual role in the initiator identity of N-formylmethionyl-tRNA by promoting its recognition by IF2 and preventing the misappropriation of this tRNA by the elongation apparatus. In Alkaliphilus oremlandii (strain OhILAs) (Clostridium oremlandii (strain OhILAs)), this protein is Methionyl-tRNA formyltransferase.